Consider the following 387-residue polypeptide: MSVIKMTDLDLAGKRVFIRADLNVPVKDGKVTSDARIRASLPTIELALKQGAKVMVTSHLGRPTEGEYNEEFSLLPVVNYLKDKLSNPVRLVKDYLDGVDVAEGELVVLENVRFNKGEKKDDETLSKKYAALCDVFVMDAFGTAHRAQASTHGIGKFADVACAGPLLAAELDALGKALKEPARPMVAIVGGSKVSTKLTVLDSLSKIADQLIVGGGIANTFIAAQGHDVGKSLYEADLVDEAKRLLSTCNIPVPSDVRVATEFSETAPATLKSVNDVKADEQILDIGDASAQELAEILKNAKTILWNGPVGVFEFPNFRKGTEIVANAIADSEAFSIAGGGDTLAAIDLFGIADKISYISTGGGAFLEFVEGKVLPAVAMLEERAKK.

Substrate is bound by residues 21-23 (DLN), Arg36, and 59-62 (HLGR). The residue at position 84 (Lys84) is an N6-acetyllysine. The substrate site is built by Arg113 and Arg146. ATP is bound by residues Lys197, Glu314, and 340-343 (GGDT).

The protein belongs to the phosphoglycerate kinase family. In terms of assembly, monomer.

It localises to the cytoplasm. It carries out the reaction (2R)-3-phosphoglycerate + ATP = (2R)-3-phospho-glyceroyl phosphate + ADP. It functions in the pathway carbohydrate degradation; glycolysis; pyruvate from D-glyceraldehyde 3-phosphate: step 2/5. This Escherichia coli O9:H4 (strain HS) protein is Phosphoglycerate kinase.